A 103-amino-acid chain; its full sequence is UPF0145 protein BLi01945/BL05168 (103 aa).

Belongs to the UPF0145 family.

The protein is UPF0145 protein BLi01945/BL05168 of Bacillus licheniformis (strain ATCC 14580 / DSM 13 / JCM 2505 / CCUG 7422 / NBRC 12200 / NCIMB 9375 / NCTC 10341 / NRRL NRS-1264 / Gibson 46).